Here is a 219-residue protein sequence, read N- to C-terminus: Probable transcriptional regulator flp (219 aa).

Residues 144 to 212 form the HTH crp-type domain; sequence DSINVRLTHY…GKQVRILNAE (69 aa). Residues 191–210 constitute a DNA-binding region (H-T-H motif); the sequence is KRLAEEKLIERSGKQVRILN.

The protein is Probable transcriptional regulator flp (flp) of Lacticaseibacillus casei (Lactobacillus casei).